A 76-amino-acid chain; its full sequence is Liver-expressed antimicrobial peptide 2 (76 aa).

The signal sequence occupies residues 1–22 (MLQLKLFAVLLTCLLLLGQVNS). Positions 23 to 36 (SPVPEVSSAKRSRR) are excised as a propeptide. 2 cysteine pairs are disulfide-bonded: C53–C64 and C59–C69.

The protein belongs to the LEAP2 family.

The protein localises to the secreted. In terms of biological role, has an antimicrobial activity. The polypeptide is Liver-expressed antimicrobial peptide 2 (Leap2) (Mus musculus (Mouse)).